The following is a 302-amino-acid chain: NAD kinase 2 (302 aa).

Residue D78 is the Proton acceptor of the active site. NAD(+)-binding positions include D78–G79, N152–E153, D182, and T193–S198.

The protein belongs to the NAD kinase family. A divalent metal cation is required as a cofactor.

It is found in the cytoplasm. The catalysed reaction is NAD(+) + ATP = ADP + NADP(+) + H(+). Its function is as follows. Involved in the regulation of the intracellular balance of NAD and NADP, and is a key enzyme in the biosynthesis of NADP. Catalyzes specifically the phosphorylation on 2'-hydroxyl of the adenosine moiety of NAD to yield NADP. This Prochlorococcus marinus (strain NATL2A) protein is NAD kinase 2.